The following is a 202-amino-acid chain: MAVFKGITPEQIDAICVGQYAGVDEVGRGPLIGNVVTAAVILDPHNPIVGLNDSKKLSEKKRELLFNQIQEKALSVSVGAATPAEIDEINILHATMMAMQRAVAGLSIKPTSVLVDGNRCPDFGMQSHAIIKGDGLIDAISAASIVAKVVRDREMEALAAQYPEYGFEKHKGYPTKAHFEALAKYGILAEHRKSFRPVREAM.

An RNase H type-2 domain is found at G18–M202. Residues D24, E25, and D116 each contribute to the a divalent metal cation site.

The protein belongs to the RNase HII family. Mn(2+) is required as a cofactor. Requires Mg(2+) as cofactor.

It localises to the cytoplasm. The catalysed reaction is Endonucleolytic cleavage to 5'-phosphomonoester.. Functionally, endonuclease that specifically degrades the RNA of RNA-DNA hybrids. In Shewanella piezotolerans (strain WP3 / JCM 13877), this protein is Ribonuclease HII.